The following is a 1136-amino-acid chain: Unconventional myosin-Ib (1136 aa).

A Myosin motor domain is found at 15–701; that stretch reads IGVGDMVLLE…TLFKLEDLRK (687 aa). The residue at position 60 (serine 60) is a Phosphoserine. 108–115 contributes to the ATP binding site; the sequence is GESGAGKT. Lysine 287 is covalently cross-linked (Glycyl lysine isopeptide (Lys-Gly) (interchain with G-Cter in SUMO1); alternate). Lysine 287 participates in a covalent cross-link: Glycyl lysine isopeptide (Lys-Gly) (interchain with G-Cter in SUMO2); alternate. An actin-binding region spans residues 578–600; it reads VATLMKNLQTKNPNYIRCIKPND. 6 IQ domains span residues 704–733, 728–748, 750–779, 779–808, 808–837, and 837–866; these read LEDL…SQIV, KKSQ…KRYQ, TKSS…QKRC, CKEA…EARN, NKHA…EARR, and RKHA…ANAG. Residues 952-1136 form the TH1 domain; the sequence is KALYPSSVGQ…NNRLLEVAVP (185 aa).

Belongs to the TRAFAC class myosin-kinesin ATPase superfamily. Myosin family.

Functionally, motor protein that may participate in process critical to neuronal development and function such as cell migration, neurite outgrowth and vesicular transport. This Homo sapiens (Human) protein is Unconventional myosin-Ib (MYO1B).